A 591-amino-acid chain; its full sequence is Paxillin (591 aa).

Met-1 carries the N-acetylmethionine modification. Position 2 is an N-acetylserine (Asp-2). Positions 3 to 15 (DLDALLADLESTT) match the LD motif 1 motif. The interval 17–138 (HISKRPVFLS…PSPTVMSTSL (122 aa)) is disordered. Tyr-31 carries the phosphotyrosine; by PTK6 modification. The segment covering 45–54 (VPPPVPPPPS) has biased composition (pro residues). The span at 69-106 (WQPSSSRFIHQQPQSSSPVYGSSAKTSSVSNPQDSVGS) shows a compositional bias: polar residues. Phosphoserine occurs at positions 83 and 85. Residue Tyr-88 is modified to Phosphotyrosine. Ser-106 carries the post-translational modification Phosphoserine. Tyr-118 bears the Phosphotyrosine; by PTK6 mark. Residues Ser-119, Ser-126, and Ser-130 each carry the phosphoserine modification. The span at 121–137 (PNKQKSAEPSPTVMSTS) shows a compositional bias: polar residues. The residue at position 132 (Thr-132) is a Phosphothreonine. Phosphoserine is present on residues Ser-137, Ser-140, and Ser-143. The LD motif 2 motif lies at 144-156 (ELDRLLLELNAVQ). The interval 159–260 (PPGFPADEAN…TQQQTRISAS (102 aa)) is disordered. A Phosphotyrosine modification is found at Tyr-181. Residues 216–228 (SVESLLDELESSV) carry the LD motif 3 motif. A Phosphoserine modification is found at Ser-230. Polar residues predominate over residues 236 to 260 (TVNQGEMSSPQRVTSTQQQTRISAS). Ser-244 carries the phosphoserine; by CDK5 modification. Ser-250 is modified (phosphoserine; by SLK). Phosphoserine is present on residues Ser-258, Ser-261, Ser-272, Ser-303, Ser-322, Ser-332, and Ser-340. The interval 262 to 315 (ATRELDELMASLSDFKIQGLEQRADGERCWAAGWPRDGGRSSPGGQDEGGFMAQ) is required for binding to PARVA and ILK. Positions 265–276 (ELDELMASLSDF) match the LD motif 4 motif. The interval 291-335 (WAAGWPRDGGRSSPGGQDEGGFMAQGKTGSSSPPGGPPKPGSQLD) is disordered. Residues 333–345 (QLDSMLGSLQSDL) carry the LD motif 5 motif. LIM zinc-binding domains lie at 356–415 (GVCG…LFSP), 416–473 (RCYY…DMFA), 474–533 (PKCG…RRGS), and 534–591 (LCSG…KLFC). Ser-533 is modified (phosphoserine).

Belongs to the paxillin family. As to quaternary structure, interacts in vitro with VCL/vinculin as well as to the SH3 domain of SRC and, when tyrosine phosphorylated, to the SH2 domain of CRK. Interacts with GIT1. Interacts with NUDT16L1/SDOS. Interacts with PTK2/FAK1. Interacts with PTK2B/PYK2. Interacts with ASAP2. Interacts with unphosphorylated ITGA4. Interacts with RNF5. Interacts with PDCD10. Interacts with NEK3, the interaction is prolactin-dependent. Interacts with PTK6. Interacts with TGFB1I1. Interacts with SORBS1. Interacts with PARVB. Interacts (via LD motif 4) with PARVA/PARVIN. Interacts (via LD motif 4) with ILK. Interacts (via cytoplasmic domain) with CEACAM1; the interaction is phosphotyrosyl-dependent. Interacts with LIMA1; this complex stabilizes actin dynamics. Interacts with CD36 (via C-terminus). Interacts with TRIM15. Interacts with PAK4; PAK4 acts as a scaffold to suppport PAXI phosphorylation at Ser-272. In terms of assembly, interacts strongly with PTK2/FAK1 and weakly with VCL/vinculin. Interacts strongly with VCL/vinculin but only weakly with PTK2/FAK1. Phosphorylated by MAPK1/ERK2. Phosphorylated on tyrosine residues during integrin-mediated cell adhesion, embryonic development, fibroblast transformation and following stimulation of cells by mitogens. Phosphorylation at Ser-244 by CDK5 reduces its interaction with PTK2/FAK1 in matrix-cell focal adhesions (MCFA) during oligodendrocytes (OLs) differentiation. Phosphorylation at Tyr-31 and Tyr-118 by PTK6 promote the activation of RAC1 via CRK/CrKII, thereby promoting migration and invasion. Phosphorylation at Ser-250 by SLK is required for PXN redistribution and cell motility. Phosphorylation at Ser-272 promotes focal adhesion disassembly during cell migration.

It is found in the cytoplasm. It localises to the cytoskeleton. The protein resides in the cell junction. The protein localises to the focal adhesion. Its subcellular location is the cell cortex. In terms of biological role, cytoskeletal protein involved in actin-membrane attachment at sites of cell adhesion to the extracellular matrix (focal adhesion). Recruits other proteins such as TRIM15 to focal adhesion. The protein is Paxillin of Homo sapiens (Human).